Here is a 993-residue protein sequence, read N- to C-terminus: Lateral signaling target protein 2 homolog (993 aa).

Disordered stretches follow at residues 340–449, 494–623, 759–813, and 825–902; these read DQRN…DTTD, DGYG…TVVQ, GARH…GDQE, and AVNE…PPAW. The segment covering 343-360 has biased composition (low complexity); sequence NNNNNINNNSSSSSNSNS. The span at 372–405 shows a compositional bias: polar residues; that stretch reads RSPSMLSLSTASPTPSHSIGSTFSAATSSTNPPV. The segment covering 409-448 has biased composition (acidic residues); sequence DGDDADDDDDGDDDDEDDDDDVDDDLVGNDDSDDDDDDTT. Phosphoserine occurs at positions 525 and 526. The segment covering 535 to 549 has biased composition (polar residues); it reads SHNNTTTIKSPDSDG. Positions 559–608 are enriched in basic residues; sequence SRQRHSHHHHRHHHHHHRHSSHSSHSHHHQHQQHHSQPHPHRTTRSGRKR. Low complexity predominate over residues 759 to 801; that stretch reads GARHSAGASMQRNHTTIDNNNSTSSSPPDATITTTTTTTTTRS. At Ser-808 the chain carries Phosphoserine. 2 stretches are compositionally biased toward low complexity: residues 842-862 and 884-896; these read SNTP…QNSP and TTAT…GTGT. The FYVE-type zinc finger occupies 905–965; the sequence is DGKAPRCMSC…VCRDCYAREI (61 aa). Zn(2+) contacts are provided by Cys-911, Cys-914, Cys-927, Cys-930, Cys-935, Cys-938, Cys-957, and Cys-960. The disordered stretch occupies residues 968–993; the sequence is SGGGGGGVVQMQRQQAANRPQTASAS. The span at 978–993 shows a compositional bias: polar residues; the sequence is MQRQQAANRPQTASAS.

This sequence belongs to the lst-2 family.

Functionally, negative regulator of epidermal growth factor receptor (EGFR) signaling. This is Lateral signaling target protein 2 homolog from Drosophila willistoni (Fruit fly).